The sequence spans 500 residues: NAD(P)H-quinone oxidoreductase chain 4, chloroplastic (500 aa).

14 helical membrane passes run 4-24 (FPWL…IFFL), 35-55 (YTIC…CYHF), 87-107 (LGPV…AWPV), 113-130 (LFHF…GSFS), 134-154 (LLLF…LLSM), 167-187 (FILY…GVGL), 207-227 (VALE…KLPI), 242-262 (HYST…YGLI), 272-292 (AHSI…IYAA), 305-325 (IAYS…SITD), 330-350 (GAIL…FLAG), 386-406 (LALP…GIIT), 416-436 (IAIT…LLSM), and 462-482 (LFVS…PDFV).

It belongs to the complex I subunit 4 family.

The protein localises to the plastid. It localises to the chloroplast thylakoid membrane. It catalyses the reaction a plastoquinone + NADH + (n+1) H(+)(in) = a plastoquinol + NAD(+) + n H(+)(out). The catalysed reaction is a plastoquinone + NADPH + (n+1) H(+)(in) = a plastoquinol + NADP(+) + n H(+)(out). The protein is NAD(P)H-quinone oxidoreductase chain 4, chloroplastic of Helianthus annuus (Common sunflower).